The primary structure comprises 237 residues: DNA repair protein RecO (237 aa).

The protein belongs to the RecO family.

In terms of biological role, involved in DNA repair and RecF pathway recombination. This Rickettsia rickettsii (strain Iowa) protein is DNA repair protein RecO.